The primary structure comprises 386 residues: Cytochrome b (386 aa).

4 consecutive transmembrane segments (helical) span residues 32–52 (FGSL…TLAM), 76–98 (WMIR…LHIG), 113–133 (PWSI…LGYV), and 179–199 (FFSL…MHLL). Positions 82 and 96 each coordinate heme b. 2 residues coordinate heme b: His183 and His197. A ubiquinone is bound at residue His202. The next 4 helical transmembrane spans lie at 225 to 245 (YTFK…LFLF), 289 to 309 (LGGV…PLLD), 321 to 341 (LMKF…WCGS), and 348 to 368 (FITL…IIVP).

Belongs to the cytochrome b family. In terms of assembly, fungal cytochrome b-c1 complex contains 10 subunits; 3 respiratory subunits, 2 core proteins and 5 low-molecular weight proteins. Cytochrome b-c1 complex is a homodimer. It depends on heme b as a cofactor.

It is found in the mitochondrion inner membrane. Its function is as follows. Component of the ubiquinol-cytochrome c reductase complex (complex III or cytochrome b-c1 complex) that is part of the mitochondrial respiratory chain. The b-c1 complex mediates electron transfer from ubiquinol to cytochrome c. Contributes to the generation of a proton gradient across the mitochondrial membrane that is then used for ATP synthesis. The protein is Cytochrome b (cob) of Rhizopus oryzae (Mucormycosis agent).